The sequence spans 188 residues: dTTP/UTP pyrophosphatase (188 aa).

The active-site Proton acceptor is aspartate 70.

This sequence belongs to the Maf family. YhdE subfamily. The cofactor is a divalent metal cation.

The protein localises to the cytoplasm. It catalyses the reaction dTTP + H2O = dTMP + diphosphate + H(+). It carries out the reaction UTP + H2O = UMP + diphosphate + H(+). Its function is as follows. Nucleoside triphosphate pyrophosphatase that hydrolyzes dTTP and UTP. May have a dual role in cell division arrest and in preventing the incorporation of modified nucleotides into cellular nucleic acids. The sequence is that of dTTP/UTP pyrophosphatase from Clostridium botulinum (strain Eklund 17B / Type B).